The following is a 216-amino-acid chain: Ras-related protein Rab-5C (216 aa).

GTP is bound by residues serine 30, alanine 31, glycine 33, lysine 34, serine 35, serine 36, histidine 47, glutamate 48, threonine 53, and glycine 79. Serine 35 contributes to the Mg(2+) binding site. Short sequence motifs (switch) lie at residues 45–57 (QFHE…IGAA) and 78–94 (AGQE…YRGA). Threonine 53 contacts Mg(2+). At serine 85 the chain carries Phosphoserine. Residues asparagine 134, lysine 135, aspartate 137, alanine 165, and lysine 166 each contribute to the GTP site. The segment at 185–216 (NEPQNAAGAPGRTRGVDLQESNPASRSQCCSN) is disordered. Positions 203–216 (QESNPASRSQCCSN) are enriched in polar residues. S-geranylgeranyl cysteine attachment occurs at residues cysteine 213 and cysteine 214.

This sequence belongs to the small GTPase superfamily. Rab family. In terms of assembly, interacts with EEA1 and INCA1. Interacts with GDI1, GDI2, CHML and CHM; phosphorylation at Ser-85 disrupts this interaction. Mg(2+) is required as a cofactor. In terms of processing, phosphorylation of Ser-85 in the switch II region by LRRK2 prevents the association of RAB regulatory proteins, including CHM, CHML and RAB GDP dissociation inhibitors GDI1 and GDI2.

It localises to the cell membrane. The protein resides in the early endosome membrane. It is found in the melanosome. It catalyses the reaction GTP + H2O = GDP + phosphate + H(+). Its activity is regulated as follows. Regulated by guanine nucleotide exchange factors (GEFs) which promote the exchange of bound GDP for free GTP. Regulated by GTPase activating proteins (GAPs) which increase the GTP hydrolysis activity. Inhibited by GDP dissociation inhibitors (GDIs). Functionally, the small GTPases Rab are key regulators of intracellular membrane trafficking, from the formation of transport vesicles to their fusion with membranes. Rabs cycle between an inactive GDP-bound form and an active GTP-bound form that is able to recruit to membranes different sets of downstream effectors directly responsible for vesicle formation, movement, tethering and fusion. This is Ras-related protein Rab-5C from Mus musculus (Mouse).